Here is a 249-residue protein sequence, read N- to C-terminus: Proteasome subunit alpha 2 (249 aa).

N-acetylmethionine is present on Met-1.

The protein belongs to the peptidase T1A family. In terms of assembly, the 20S proteasome core is composed of 14 alpha and 14 beta subunits that assemble into four stacked heptameric rings, resulting in a barrel-shaped structure. The two inner rings, each composed of seven catalytic beta subunits, are sandwiched by two outer rings, each composed of seven alpha subunits. H.volcanii produces at least 2 types of 20S proteasomes: an alpha1-beta proteasome and a proteasome containing all three subunits (alpha1, alpha2, and beta) that appears to be asymmetrical with homo-oligomeric alpha1 and alpha2 rings positioned on separate ends. The catalytic chamber with the active sites is on the inside of the barrel. Has probably a gated structure, the ends of the cylinder being occluded by the N-termini of the alpha-subunits. Is likely capped at one or both ends by the proteasome regulatory ATPase, PAN.

It localises to the cytoplasm. The formation of the proteasomal ATPase PAN-20S proteasome complex, via the docking of the C-termini of PAN into the intersubunit pockets in the alpha-rings, triggers opening of the gate for substrate entry. Interconversion between the open-gate and close-gate conformations leads to a dynamic regulation of the 20S proteasome proteolysis activity. In terms of biological role, component of the proteasome core, a large protease complex with broad specificity involved in protein degradation. The H.volcanii alpha1-beta-alpha2 proteasome is able to cleave oligopeptides after Tyr and thus displays chymotrypsin-like activity. The protein is Proteasome subunit alpha 2 of Haloferax volcanii (strain ATCC 29605 / DSM 3757 / JCM 8879 / NBRC 14742 / NCIMB 2012 / VKM B-1768 / DS2) (Halobacterium volcanii).